The chain runs to 265 residues: Phosphate import ATP-binding protein PstB 2 (265 aa).

Residues 13-260 (FRTENLNVYY…PTKQATRDYV (248 aa)) enclose the ABC transporter domain. 45–52 (GPSGCGKS) serves as a coordination point for ATP.

Belongs to the ABC transporter superfamily. Phosphate importer (TC 3.A.1.7) family. As to quaternary structure, the complex is composed of two ATP-binding proteins (PstB), two transmembrane proteins (PstC and PstA) and a solute-binding protein (PstS).

It is found in the cell inner membrane. It catalyses the reaction phosphate(out) + ATP + H2O = ADP + 2 phosphate(in) + H(+). Functionally, part of the ABC transporter complex PstSACB involved in phosphate import. Responsible for energy coupling to the transport system. In Synechococcus sp. (strain JA-2-3B'a(2-13)) (Cyanobacteria bacterium Yellowstone B-Prime), this protein is Phosphate import ATP-binding protein PstB 2.